The primary structure comprises 354 residues: NADH-quinone oxidoreductase subunit H (354 aa).

8 helical membrane-spanning segments follow: residues 16 to 36 (WLAVLITLVLQAVAVILPVMI), 90 to 110 (YLFIIAPILALAPAVAAWAVI), 126 to 146 (VLYVLAVASIGVYGIVISGWA), 170 to 190 (MGFALVTVLMVADTMNLTGIV), 197 to 217 (IWNWYWIPLLPMFFVYFISGL), 249 to 269 (VFFLAEYAMMILISFMTAIMF), 290 to 310 (VPGFVWLFAKVAFLLFLFLWF), and 329 to 349 (VLIPVTIVWVFVVGVMEYFKV).

The protein belongs to the complex I subunit 1 family. In terms of assembly, NDH-1 is composed of 14 different subunits. Subunits NuoA, H, J, K, L, M, N constitute the membrane sector of the complex.

The protein resides in the cell inner membrane. The catalysed reaction is a quinone + NADH + 5 H(+)(in) = a quinol + NAD(+) + 4 H(+)(out). Functionally, NDH-1 shuttles electrons from NADH, via FMN and iron-sulfur (Fe-S) centers, to quinones in the respiratory chain. The immediate electron acceptor for the enzyme in this species is believed to be ubiquinone. Couples the redox reaction to proton translocation (for every two electrons transferred, four hydrogen ions are translocated across the cytoplasmic membrane), and thus conserves the redox energy in a proton gradient. This subunit may bind ubiquinone. This Hydrogenovibrio crunogenus (strain DSM 25203 / XCL-2) (Thiomicrospira crunogena) protein is NADH-quinone oxidoreductase subunit H.